Reading from the N-terminus, the 1079-residue chain is Eukaryotic translation initiation factor 5B (1079 aa).

The segment at 1 to 478 (MGKKGKKSGY…QAAPAESNVS (478 aa)) is disordered. Over residues 22-38 (SGQNEYLDNTSQDSPQN) the composition is skewed to polar residues. Residues 57-67 (SKKKKGKKNKG) are compositionally biased toward basic residues. 3 positions are modified to phosphoserine: S73, S77, and S82. The segment covering 105 to 114 (KKGKKGKKSK) has biased composition (basic residues). S127 is modified (phosphoserine). A compositionally biased stretch (low complexity) spans 160 to 169 (NNNESEAAAP). Over residues 173 to 192 (PEVRVKTKKEKEREKKEREK) the composition is skewed to basic and acidic residues. Basic residues predominate over residues 193-204 (LRKKQQQAKKKG). A compositionally biased stretch (polar residues) spans 207–233 (GEDTLASSEVSSEVDISTPAENDSSAK). The segment covering 253–293 (MLEEKRAREEEEQRIREEEARIAEEEKRLAEVEEARKEEAR) has biased composition (basic and acidic residues). 2 stretches are compositionally biased toward low complexity: residues 321-334 (QQALAQRRLQQMLE) and 361-376 (RSGTSSISSSGILESS). A Phosphothreonine modification is found at T364. The segment covering 385-408 (EPQKDSKDDSEKVEKETEVERKEE) has biased composition (basic and acidic residues). Residues 409-431 (NEAEAEAVFDDWEAALEEPEVAE) show a composition bias toward acidic residues. A compositionally biased stretch (basic and acidic residues) spans 436–466 (VTEKKETDIKSDAVEHSIKDKEDSKTDKVDD). One can recognise a tr-type G domain in the interval 482-700 (LRSPICCILG…LISLTQTRMS (219 aa)). Residues 491–498 (GHVDTGKT) are G1. 491–498 (GHVDTGKT) contacts GTP. The G2 stretch occupies residues 516-520 (GITQQ). Positions 555–558 (DTPG) are G3. A G4 region spans residues 609–612 (NKVD). A G5 region spans residues 677-679 (SAQ).

This sequence belongs to the TRAFAC class translation factor GTPase superfamily. Classic translation factor GTPase family. IF-2 subfamily. A monovalent cation serves as cofactor.

Its subcellular location is the cytoplasm. It carries out the reaction GTP + H2O = GDP + phosphate + H(+). In terms of biological role, plays a role in translation initiation. Translational GTPase that catalyzes the joining of the 40S and 60S subunits to form the 80S initiation complex with the initiator methionine-tRNA in the P-site base paired to the start codon. GTP binding and hydrolysis induces conformational changes in the enzyme that renders it active for productive interactions with the ribosome. The release of the enzyme after formation of the initiation complex is a prerequisite to form elongation-competent ribosomes. In Schizosaccharomyces pombe (strain 972 / ATCC 24843) (Fission yeast), this protein is Eukaryotic translation initiation factor 5B.